We begin with the raw amino-acid sequence, 755 residues long: Tryptophan 2-monooxygenase (755 aa).

S247, E267, K275, and R295 together coordinate FMN. R295 is a substrate binding site.

The protein belongs to the tryptophan 2-monooxygenase family. The cofactor is FMN.

The catalysed reaction is L-tryptophan + O2 = indole-3-acetamide + CO2 + H2O. Its pathway is plant hormone metabolism; auxin biosynthesis. The protein is Tryptophan 2-monooxygenase (tms1) of Rhizobium radiobacter (Agrobacterium tumefaciens).